Consider the following 530-residue polypeptide: Chaperonin GroEL, chloroplastic (530 aa).

ATP contacts are provided by residues 29-32 (TLGP), 86-90 (DGTTT), G414, 480-482 (DAL), and D496.

Belongs to the chaperonin (HSP60) family. As to quaternary structure, forms a cylinder of 14 subunits composed of two heptameric rings stacked back-to-back. Interacts with the co-chaperonin GroES.

The protein localises to the plastid. It is found in the chloroplast. It catalyses the reaction ATP + H2O + a folded polypeptide = ADP + phosphate + an unfolded polypeptide.. Together with its co-chaperonin GroES, plays an essential role in assisting protein folding. The GroEL-GroES system forms a nano-cage that allows encapsulation of the non-native substrate proteins and provides a physical environment optimized to promote and accelerate protein folding. The protein is Chaperonin GroEL, chloroplastic of Cyanidium caldarium (Red alga).